The sequence spans 359 residues: tRNA-specific 2-thiouridylase MnmA (359 aa).

Residues 9–16 and Met-35 contribute to the ATP site; that span reads GMSGGVDS. The active-site Nucleophile is Cys-105. Cys-105 and Cys-203 are disulfide-bonded. Gly-129 contributes to the ATP binding site. The tract at residues 153–155 is interaction with tRNA; it reads KDQ. The Cysteine persulfide intermediate role is filled by Cys-203. The interval 309–310 is interaction with tRNA; the sequence is RY.

Belongs to the MnmA/TRMU family.

The protein localises to the cytoplasm. It carries out the reaction S-sulfanyl-L-cysteinyl-[protein] + uridine(34) in tRNA + AH2 + ATP = 2-thiouridine(34) in tRNA + L-cysteinyl-[protein] + A + AMP + diphosphate + H(+). Functionally, catalyzes the 2-thiolation of uridine at the wobble position (U34) of tRNA, leading to the formation of s(2)U34. The sequence is that of tRNA-specific 2-thiouridylase MnmA from Acetivibrio thermocellus (strain ATCC 27405 / DSM 1237 / JCM 9322 / NBRC 103400 / NCIMB 10682 / NRRL B-4536 / VPI 7372) (Clostridium thermocellum).